Here is a 497-residue protein sequence, read N- to C-terminus: Acetyltransferase adrJ (497 aa).

Residues His-174 and Asp-422 each act as proton acceptor in the active site. Residues 430–451 (SSAQSSSQNTQKKGKPSYVNGV) are disordered.

Belongs to the plant acyltransferase family. Monomer.

It functions in the pathway secondary metabolite biosynthesis; terpenoid biosynthesis. Its function is as follows. Acetyltransferase; part of the gene cluster that mediates the biosynthesis of andrastins, meroterpenoid compounds that exhibit inhibitory activity against ras farnesyltransferase, suggesting that they could be promising leads for antitumor agents. The first step of the pathway is the synthesis of 3,5-dimethylorsellinic acid (DMOA) by the polyketide synthase adrD via condensation of one acetyl-CoA starter unit with 3 malonyl-CoA units and 2 methylations. DMAO is then converted to farnesyl-DMAO by the prenyltransferase adrG. The methyltransferase adrK catalyzes the methylation of the carboxyl group of farnesyl-DMAO to farnesyl-DMAO methyl ester which is further converted to epoxyfarnesyl-DMAO methyl ester by the FAD-dependent monooxygenase adrH. The terpene cyclase adrI then catalyzes the carbon skeletal rearrangement to generate the andrastin E, the first compound in the pathway having the andrastin scaffold, with the tetracyclic ring system. The post-cyclization tailoring enzymes adrF, adrE, adrJ, and adrA, are involved in the conversion of andrastin E into andrastin A. The short chain dehydrogenase adrF is responsible for the oxidation of the C-3 a hydroxyl group of andrastin E to yield the corresponding ketone, andrastin D. The ketoreductase adrE stereoselectively reduces the carbonyl moiety to reverse the stereochemistry of the C-3 position to yield andrastin F. The acetyltransferase adrJ is the acetyltransferase that attaches the acetyl group to the C-3 hydroxyl group of andrastin F to yield andrastin C. Finally, the cytochrome P450 monooxygenase adrA catalyzes two sequential oxidation reactions of the C-23 methyl group, to generate the corresponding alcohol andrastin B, and aldehyde andrastin A. The sequence is that of Acetyltransferase adrJ from Penicillium rubens (strain ATCC 28089 / DSM 1075 / NRRL 1951 / Wisconsin 54-1255) (Penicillium chrysogenum).